The chain runs to 326 residues: Nine-heme cytochrome c (326 aa).

The first 30 residues, 1 to 30, serve as a signal peptide directing secretion; sequence MRNGTSLLLLAAIALAGAACLTAMGGTAKA. Positions 67, 70, 77, 80, 81, 82, 89, 92, 93, 111, 127, 130, 131, 141, 144, 145, 157, 160, 161, 227, 230, 248, 255, 258, 259, 260, 271, 274, 275, 294, 297, 300, 301, 314, 317, and 318 each coordinate heme.

In terms of assembly, monomer. Binds 9 heme groups per subunit.

It localises to the periplasm. In terms of biological role, may form part of a transmembrane redox complex through which electrons are transferred to the cytoplasm for reduction of sulfate. This is Nine-heme cytochrome c from Desulfovibrio desulfuricans (strain ATCC 27774 / DSM 6949 / MB).